Here is a 256-residue protein sequence, read N- to C-terminus: Cell division protein ZipA (256 aa).

Over 1–6 (MQYGRQ) the chain is Periplasmic. Residues 7-27 (ILICIGILTVIILLLYGLLNS) traverse the membrane as a helical segment. Over 28 to 256 (YWDRTVTFCK…RHVLSANKST (229 aa)) the chain is Cytoplasmic.

This sequence belongs to the ZipA family. In terms of assembly, interacts with FtsZ via their C-terminal domains.

Its subcellular location is the cell inner membrane. In terms of biological role, essential cell division protein that stabilizes the FtsZ protofilaments by cross-linking them and that serves as a cytoplasmic membrane anchor for the Z ring. Also required for the recruitment to the septal ring of downstream cell division proteins. In Baumannia cicadellinicola subsp. Homalodisca coagulata, this protein is Cell division protein ZipA.